We begin with the raw amino-acid sequence, 428 residues long: UPF0597 protein Dde_0807 (428 aa).

It belongs to the UPF0597 family.

In Oleidesulfovibrio alaskensis (strain ATCC BAA-1058 / DSM 17464 / G20) (Desulfovibrio alaskensis), this protein is UPF0597 protein Dde_0807.